Reading from the N-terminus, the 220-residue chain is Ribosome maturation factor RimM (220 aa).

Residues 143-220 (EGEFYWVDLI…RIVVDWGLDY (78 aa)) form the PRC barrel domain.

It belongs to the RimM family. In terms of assembly, binds ribosomal protein uS19.

The protein resides in the cytoplasm. In terms of biological role, an accessory protein needed during the final step in the assembly of 30S ribosomal subunit, possibly for assembly of the head region. Essential for efficient processing of 16S rRNA. May be needed both before and after RbfA during the maturation of 16S rRNA. It has affinity for free ribosomal 30S subunits but not for 70S ribosomes. This is Ribosome maturation factor RimM from Cupriavidus metallidurans (strain ATCC 43123 / DSM 2839 / NBRC 102507 / CH34) (Ralstonia metallidurans).